Reading from the N-terminus, the 477-residue chain is Methionine aminopeptidase 2 (477 aa).

The segment at 1–121 (MAGVEEAASC…TDPPSVPICD (121 aa)) is disordered. At Ala2 the chain carries N-acetylalanine. The span at 36 to 46 (KKKKRKKKKSK) shows a compositional bias: basic residues. Ser45 is subject to Phosphoserine. A compositionally biased stretch (basic and acidic residues) spans 54-78 (EPDKEAGASVDEVTRQLERQALEEK). At Ser62 the chain carries Phosphoserine; alternate. An O-linked (GlcNAc) serine; alternate glycan is attached at Ser62. The segment covering 79 to 91 (EKDDDDEDGDGDG) has biased composition (acidic residues). Basic residues predominate over residues 96 to 108 (GKKKKKKKKKRGP). His230 serves as a coordination point for substrate. Asp250, Asp261, and His330 together coordinate a divalent metal cation. His338 lines the substrate pocket. Positions 363 and 458 each coordinate a divalent metal cation.

Belongs to the peptidase M24A family. Methionine aminopeptidase eukaryotic type 2 subfamily. In terms of assembly, binds EIF2S1 at low magnesium concentrations. Interacts strongly with the eIF-2 gamma-subunit EIF2S3. The cofactor is Co(2+). It depends on Zn(2+) as a cofactor. Mn(2+) serves as cofactor. Requires Fe(2+) as cofactor. Contains approximately 12 O-linked N-acetylglucosamine (GlcNAc) residues. O-glycosylation is required for EIF2S1 binding.

It is found in the cytoplasm. It carries out the reaction Release of N-terminal amino acids, preferentially methionine, from peptides and arylamides.. Functionally, cotranslationally removes the N-terminal methionine from nascent proteins. The N-terminal methionine is often cleaved when the second residue in the primary sequence is small and uncharged (Met-Ala-, Cys, Gly, Pro, Ser, Thr, or Val). Its function is as follows. Protects eukaryotic initiation factor EIF2S1 from translation-inhibiting phosphorylation by inhibitory kinases such as EIF2AK2/PKR and EIF2AK1/HCR. Plays a critical role in the regulation of protein synthesis. The polypeptide is Methionine aminopeptidase 2 (Bos taurus (Bovine)).